The primary structure comprises 423 residues: Vitamin D3 receptor (423 aa).

Zn(2+) is bound by residues cysteine 24, cysteine 27, cysteine 41, cysteine 44, cysteine 60, cysteine 66, cysteine 76, and cysteine 79. 2 NR C4-type zinc fingers span residues 24-44 (CGVCGDRATGFHFNAMTCEGC) and 60-84 (CPFNGDCRITKDNRRHCQACRLKRC). A DNA-binding region (nuclear receptor) is located at residues 24 to 89 (CGVCGDRATG…RLKRCVDIGM (66 aa)). The interval 97 to 126 (DEEVQRKREMIMKRKEEEALKDSLRPKLSE) is hinge. Residues 127-419 (EQQHIIAILL…LTPLVLEVFG (293 aa)) form the NR LBD domain. Tyrosine 143 serves as a coordination point for calcitriol. The segment at 159–180 (MDGSTGSYSPRPTLSFSGNSSS) is disordered. Residues 171–180 (TLSFSGNSSS) are compositionally biased toward low complexity. A calcitriol-binding site is contributed by serine 233. The interaction with coactivator LXXLL motif stretch occupies residues 242–260 (KMIPGFRDLTSDDQIVLLK). Positions 270, 274, 301, and 393 each coordinate calcitriol. Positions 412-420 (PLVLEVFGN) match the 9aaTAD motif.

Belongs to the nuclear hormone receptor family. NR1 subfamily. Homodimer in the absence of bound vitamin D3. Heterodimer with RXRA after vitamin D3 binding. Interacts with MED1 and NCOA6. Interacts with MED1, NCOA1, NCOA2, NCOA3 and NCOA6 coactivators, leading to a strong increase of transcription of target genes. Interacts with the corepressor NCOR1. Interacts with SNW1. Interacts with IRX4, the interaction does not affect its transactivation activity. Interacts with CRY1. Interacts with CRY2 in a ligand-dependent manner. Ubiquitinated by UBR5, leading to its degradation: UBR5 specifically recognizes and binds ligand-bound VDR when it is not associated with coactivators (NCOAs). In presence of NCOAs, the UBR5-degron is not accessible, preventing its ubiquitination and degradation. As to expression, detected in intestine and kidney.

It localises to the nucleus. Its subcellular location is the cytoplasm. Nuclear receptor for calcitriol, the active form of vitamin D3 which mediates the action of this vitamin on cells. Enters the nucleus upon vitamin D3 binding where it forms heterodimers with the retinoid X receptor/RXR. The VDR-RXR heterodimers bind to specific response elements on DNA and activate the transcription of vitamin D3-responsive target genes. Plays a central role in calcium homeostasis. Also functions as a receptor for the secondary bile acid lithocholic acid (LCA) and its metabolites. This chain is Vitamin D3 receptor (Vdr), found in Rattus norvegicus (Rat).